Consider the following 117-residue polypeptide: Protein Rev (117 aa).

Phosphoserine; by host CK2 occurs at positions 5 and 8. The homomultimerization stretch occupies residues 18 to 26 (LIKILYQSN). The segment at 24 to 49 (QSNPPPNTEGTTRQARRNRRRRWRAR) is disordered. Positions 35-51 (TRQARRNRRRRWRARQR) match the Nuclear localization signal and RNA-binding (RRE) motif. Positions 37-49 (QARRNRRRRWRAR) are enriched in basic residues. A Nuclear export signal and binding to XPO1 motif is present at residues 74–85 (LQLPPLERLTLN). 2 positions are modified to phosphoserine; by host: Ser-93 and Ser-100. The span at 93 to 105 (SGTQGVGSPQISV) shows a compositional bias: polar residues. Residues 93–117 (SGTQGVGSPQISVESPAILGSGTEE) form a disordered region.

This sequence belongs to the HIV-1 REV protein family. In terms of assembly, homomultimer; when bound to the RRE. Multimeric assembly is essential for activity and may involve XPO1. Binds to human KPNB1, XPO1, TNPO1, RANBP5 and IPO7. Interacts with the viral Integrase. Interacts with human KHDRBS1. Interacts with human NAP1; this interaction decreases Rev multimerization and stimulates its activity. Interacts with human DEAD-box helicases DDX3 and DDX24; these interactions may serve for viral RNA export to the cytoplasm and packaging, respectively. Interacts with human PSIP1; this interaction may inhibit HIV-1 DNA integration by promoting dissociation of the Integrase-LEDGF/p75 complex. Asymmetrically arginine dimethylated at one site by host PRMT6. Methylation impairs the RNA-binding activity and export of viral RNA from the nucleus to the cytoplasm. Post-translationally, phosphorylated by protein kinase CK2. Presence of, and maybe binding to the N-terminus of the regulatory beta subunit of CK2 is necessary for CK2-mediated Rev's phosphorylation.

Its subcellular location is the host nucleus. It localises to the host nucleolus. The protein localises to the host cytoplasm. Its function is as follows. Escorts unspliced or incompletely spliced viral pre-mRNAs (late transcripts) out of the nucleus of infected cells. These pre-mRNAs carry a recognition sequence called Rev responsive element (RRE) located in the env gene, that is not present in fully spliced viral mRNAs (early transcripts). This function is essential since most viral proteins are translated from unspliced or partially spliced pre-mRNAs which cannot exit the nucleus by the pathway used by fully processed cellular mRNAs. Rev itself is translated from a fully spliced mRNA that readily exits the nucleus. Rev's nuclear localization signal (NLS) binds directly to KPNB1/Importin beta-1 without previous binding to KPNA1/Importin alpha-1. KPNB1 binds to the GDP bound form of RAN (Ran-GDP) and targets Rev to the nucleus. In the nucleus, the conversion from Ran-GDP to Ran-GTP dissociates Rev from KPNB1 and allows Rev's binding to the RRE in viral pre-mRNAs. Rev multimerization on the RRE via cooperative assembly exposes its nuclear export signal (NES) to the surface. Rev can then form a complex with XPO1/CRM1 and Ran-GTP, leading to nuclear export of the complex. Conversion from Ran-GTP to Ran-GDP mediates dissociation of the Rev/RRE/XPO1/RAN complex, so that Rev can return to the nucleus for a subsequent round of export. Beside KPNB1, also seems to interact with TNPO1/Transportin-1, RANBP5/IPO5 and IPO7/RANBP7 for nuclear import. The nucleoporin-like HRB/RIP is an essential cofactor that probably indirectly interacts with Rev to release HIV RNAs from the perinuclear region to the cytoplasm. In Human immunodeficiency virus type 1 group M subtype A (isolate MAL) (HIV-1), this protein is Protein Rev.